The following is a 140-amino-acid chain: Large ribosomal subunit protein uL11 (140 aa).

Belongs to the universal ribosomal protein uL11 family. Part of the ribosomal stalk of the 50S ribosomal subunit. Interacts with L10 and the large rRNA to form the base of the stalk. L10 forms an elongated spine to which L12 dimers bind in a sequential fashion forming a multimeric L10(L12)X complex. One or more lysine residues are methylated.

Its function is as follows. Forms part of the ribosomal stalk which helps the ribosome interact with GTP-bound translation factors. This chain is Large ribosomal subunit protein uL11, found in Pelobacter propionicus (strain DSM 2379 / NBRC 103807 / OttBd1).